A 353-amino-acid chain; its full sequence is ATP-dependent kinase YFH7 (353 aa).

31-39 (GSPGSGKST) lines the ATP pocket.

It belongs to the YFH7 family.

ATP-dependent kinase that could be involved in endoplasmic reticulum membrane assembly. The sequence is that of ATP-dependent kinase YFH7 (YFH7) from Saccharomyces cerevisiae (strain ATCC 204508 / S288c) (Baker's yeast).